The primary structure comprises 598 residues: UvrABC system protein C (598 aa).

The GIY-YIG domain occupies 14–91 (DQPGCYLMKD…IHKNNPKYNI (78 aa)). The region spanning 196–231 (TEIQDRLQEKMAYAAAHMEFEKAAEFRDQIKAIETV) is the UVR domain.

It belongs to the UvrC family. As to quaternary structure, interacts with UvrB in an incision complex.

The protein resides in the cytoplasm. The UvrABC repair system catalyzes the recognition and processing of DNA lesions. UvrC both incises the 5' and 3' sides of the lesion. The N-terminal half is responsible for the 3' incision and the C-terminal half is responsible for the 5' incision. The protein is UvrABC system protein C of Enterococcus faecalis (strain ATCC 700802 / V583).